The chain runs to 350 residues: Putative transport protein YdbI (350 aa).

The next 8 helical transmembrane spans lie at 18-38 (IFVVLTGVLYLFKSMINLILL), 67-87 (VVITFLYMLLAVLLTVGGFVF), 145-165 (ISTFGLQVVMALILSMFFLFE), 207-227 (FIIALVNCILTFIALWIMHFP), 229-249 (LFGLSIMVFFLGLIPVAGVVI), 257-277 (IAYSTGGGMYVLYIVLVIFAI), 289-309 (LMSAKTELPIFFTFTVLIFSE), and 311-331 (FFGIWGLIIGIPIFVFLLDIL).

This sequence belongs to the autoinducer-2 exporter (AI-2E) (TC 2.A.86) family.

The protein localises to the cell membrane. This chain is Putative transport protein YdbI (ydbI), found in Bacillus subtilis (strain 168).